The following is a 192-amino-acid chain: Fe/S biogenesis protein NfuA (192 aa).

Residues Cys-150 and Cys-153 each coordinate [4Fe-4S] cluster.

This sequence belongs to the NfuA family. In terms of assembly, homodimer. [4Fe-4S] cluster is required as a cofactor.

In terms of biological role, involved in iron-sulfur cluster biogenesis. Binds a 4Fe-4S cluster, can transfer this cluster to apoproteins, and thereby intervenes in the maturation of Fe/S proteins. Could also act as a scaffold/chaperone for damaged Fe/S proteins. The sequence is that of Fe/S biogenesis protein NfuA from Ruthia magnifica subsp. Calyptogena magnifica.